A 149-amino-acid polypeptide reads, in one-letter code: MKSTLRISLKAGERIFINGAVLRVDRKVALEFLNDVTFLLENHVLQPEGATTPLRQLYFIAQMILINPEGKDHSTAMFRKSITMLLTCFKNEEILAELKRIDALVSTGRAFDALKAIRGLYAIEDNILNNHELPPTMVEQIRREIAPWR.

Belongs to the FlbT family.

In terms of biological role, has a post-transcriptional repressor function in flagellum biogenesis. Associates with the 5'-UTR of fljK mRNA and promotes its degradation. In Rhizobium etli (strain CIAT 652), this protein is Probable flagellum biosynthesis repressor protein FlbT.